Reading from the N-terminus, the 380-residue chain is Mitogen-activated protein kinase mpkC (380 aa).

The 281-residue stretch at 20–300 folds into the Protein kinase domain; the sequence is YVNLQPIGMG…AQDALRHPYL (281 aa). ATP-binding positions include 26–34 and K49; that span reads IGMGSFGLV. The active-site Proton acceptor is the D141. Phosphothreonine is present on T171. A TXY motif is present at residues 171 to 173; the sequence is TGY. The residue at position 173 (Y173) is a Phosphotyrosine.

Belongs to the protein kinase superfamily. Ser/Thr protein kinase family. MAP kinase subfamily. HOG1 sub-subfamily. It depends on Mg(2+) as a cofactor. In terms of processing, dually phosphorylated on Thr-171 and Tyr-173, which activates the enzyme.

The catalysed reaction is L-seryl-[protein] + ATP = O-phospho-L-seryl-[protein] + ADP + H(+). It carries out the reaction L-threonyl-[protein] + ATP = O-phospho-L-threonyl-[protein] + ADP + H(+). Activated by tyrosine and threonine phosphorylation. Functionally, mitogen-activated protein kinase required for growth on media where sorbitol or mannitol is the sole carbon source. The protein is Mitogen-activated protein kinase mpkC (mpkC) of Aspergillus clavatus (strain ATCC 1007 / CBS 513.65 / DSM 816 / NCTC 3887 / NRRL 1 / QM 1276 / 107).